A 353-amino-acid polypeptide reads, in one-letter code: Guanine nucleotide-binding protein subunit alpha (353 aa).

The interval 1-21 (MGCGMSTEEKEGKARNEEIEN) is disordered. The N-myristoyl glycine moiety is linked to residue Gly2. Residue Cys3 is the site of S-palmitoyl cysteine attachment. The span at 7–21 (TEEKEGKARNEEIEN) shows a compositional bias: basic and acidic residues. Residues 32-353 (NEIKMLLLGA…QENLRLCGLI (322 aa)) enclose the G-alpha domain. The tract at residues 35–48 (KMLLLGAGESGKST) is G1 motif. Residues Glu43, Ser44, Gly45, Lys46, Ser47, Thr48, Asp150, Leu175, Thr181, Gly203, Asn269, Lys270, Asp272, and Ala325 each contribute to the GTP site. Ser47 is a Mg(2+) binding site. The segment at 173–181 (DVLRSRVKT) is G2 motif. Thr181 lines the Mg(2+) pocket. Positions 196–205 (YRMFDVGGQR) are G3 motif. The interval 265-272 (ILFLNKID) is G4 motif. Positions 323-328 (TCATDT) are G5 motif.

The protein belongs to the G-alpha family. G(q) subfamily. As to quaternary structure, g proteins are composed of 3 units; alpha, beta and gamma. The alpha chain contains the guanine nucleotide binding site. Requires Mg(2+) as cofactor.

Functionally, guanine nucleotide-binding proteins (G proteins) are involved as modulators or transducers in various transmembrane signaling systems. Plays a role in pathogenicity, specifically in appressorium formation in rice blast disease. Also involved in mating. The chain is Guanine nucleotide-binding protein subunit alpha (MAGB) from Pyricularia oryzae (strain 70-15 / ATCC MYA-4617 / FGSC 8958) (Rice blast fungus).